A 432-amino-acid chain; its full sequence is Adenylosuccinate synthetase (432 aa).

GTP-binding positions include G13 to K19 and G41 to T43. Catalysis depends on D14, which acts as the Proton acceptor. D14 and G41 together coordinate Mg(2+). Residues D14 to K17, N39 to H42, T130, R144, Q225, T240, and R304 each bind IMP. The Proton donor role is filled by H42. Position 300–306 (A300–R306) interacts with substrate. Residues R306, K332 to D334, and S415 to G417 contribute to the GTP site.

The protein belongs to the adenylosuccinate synthetase family. As to quaternary structure, homodimer. Requires Mg(2+) as cofactor.

Its subcellular location is the cytoplasm. The enzyme catalyses IMP + L-aspartate + GTP = N(6)-(1,2-dicarboxyethyl)-AMP + GDP + phosphate + 2 H(+). It participates in purine metabolism; AMP biosynthesis via de novo pathway; AMP from IMP: step 1/2. In terms of biological role, plays an important role in the de novo pathway of purine nucleotide biosynthesis. Catalyzes the first committed step in the biosynthesis of AMP from IMP. The polypeptide is Adenylosuccinate synthetase (Actinobacillus succinogenes (strain ATCC 55618 / DSM 22257 / CCUG 43843 / 130Z)).